The following is a 120-amino-acid chain: Large ribosomal subunit protein uL18 (120 aa).

It belongs to the universal ribosomal protein uL18 family. As to quaternary structure, part of the 50S ribosomal subunit; part of the 5S rRNA/L5/L18/L25 subcomplex. Contacts the 5S and 23S rRNAs.

Functionally, this is one of the proteins that bind and probably mediate the attachment of the 5S RNA into the large ribosomal subunit, where it forms part of the central protuberance. The chain is Large ribosomal subunit protein uL18 from Methylobacterium nodulans (strain LMG 21967 / CNCM I-2342 / ORS 2060).